Reading from the N-terminus, the 228-residue chain is Phosphatidate cytidylyltransferase (228 aa).

6 consecutive transmembrane segments (helical) span residues 31-51 (FVVA…LVGL), 65-85 (IHYL…LIFL), 93-113 (LVIM…MIGG), 131-151 (WTGL…VSLI), 165-185 (IYLF…DLFI), and 206-226 (GVLD…GINI).

Belongs to the CDS family.

Its subcellular location is the cell membrane. It carries out the reaction a 1,2-diacyl-sn-glycero-3-phosphate + CTP + H(+) = a CDP-1,2-diacyl-sn-glycerol + diphosphate. It functions in the pathway phospholipid metabolism; CDP-diacylglycerol biosynthesis; CDP-diacylglycerol from sn-glycerol 3-phosphate: step 3/3. This Rickettsia typhi (strain ATCC VR-144 / Wilmington) protein is Phosphatidate cytidylyltransferase (cdsA).